The following is a 545-amino-acid chain: Glucose-6-phosphate isomerase (545 aa).

Glu351 (proton donor) is an active-site residue. Catalysis depends on residues His382 and Lys510.

This sequence belongs to the GPI family.

It localises to the cytoplasm. The catalysed reaction is alpha-D-glucose 6-phosphate = beta-D-fructose 6-phosphate. The protein operates within carbohydrate biosynthesis; gluconeogenesis. It functions in the pathway carbohydrate degradation; glycolysis; D-glyceraldehyde 3-phosphate and glycerone phosphate from D-glucose: step 2/4. Its function is as follows. Catalyzes the reversible isomerization of glucose-6-phosphate to fructose-6-phosphate. The polypeptide is Glucose-6-phosphate isomerase (Shewanella putrefaciens (strain CN-32 / ATCC BAA-453)).